Reading from the N-terminus, the 79-residue chain is Moronecidin (79 aa).

The signal sequence occupies residues 1–22; sequence MKCATLFLVLSMVVLMAEPGDA. G44 is modified (glycine amide). The segment at 45–79 is disordered; it reads GKAEQDQQDQQYQQEQQEQQAQQYQRFNRERAAFD. The propeptide occupies 47 to 79; that stretch reads AEQDQQDQQYQQEQQEQQAQQYQRFNRERAAFD. Residues 52-69 are compositionally biased toward low complexity; sequence QDQQYQQEQQEQQAQQYQ.

In terms of tissue distribution, expressed in mast cells in gill, skin and gut, and in lining blood vessels in the viscera. Also in intestine, spleen, anterior kidney, and blood cells.

Its subcellular location is the secreted. Functionally, antimicrobial peptide with broad-spectrum activity against Gram-positive and Gram-negative bacteria as well as against a variety of fungi. Rapidly inactivates channel catfish herpesvirus (ED(50)=4 uM) and frog virus 3 (ED(50)=13 uM) over a wide temperature range. Seems to disrupt the membranes by adopting an alpha helical conformation and forming toroidal pores. Has hemolytic activity. This chain is Moronecidin, found in Morone saxatilis (Striped bass).